The sequence spans 398 residues: Succinate--CoA ligase [ADP-forming] subunit beta (398 aa).

The ATP-grasp domain occupies 9–254 (KAVLREFGVS…ETEEDAKEIE (246 aa)). Residues Lys46, 53–55 (GRG), Glu109, Ala112, and Glu117 contribute to the ATP site. Mg(2+) contacts are provided by Asn209 and Asp223. Substrate contacts are provided by residues Asn274 and 331–333 (GIM).

It belongs to the succinate/malate CoA ligase beta subunit family. Heterotetramer of two alpha and two beta subunits. Requires Mg(2+) as cofactor.

It catalyses the reaction succinate + ATP + CoA = succinyl-CoA + ADP + phosphate. The catalysed reaction is GTP + succinate + CoA = succinyl-CoA + GDP + phosphate. It functions in the pathway carbohydrate metabolism; tricarboxylic acid cycle; succinate from succinyl-CoA (ligase route): step 1/1. Its function is as follows. Succinyl-CoA synthetase functions in the citric acid cycle (TCA), coupling the hydrolysis of succinyl-CoA to the synthesis of either ATP or GTP and thus represents the only step of substrate-level phosphorylation in the TCA. The beta subunit provides nucleotide specificity of the enzyme and binds the substrate succinate, while the binding sites for coenzyme A and phosphate are found in the alpha subunit. This is Succinate--CoA ligase [ADP-forming] subunit beta from Afipia carboxidovorans (strain ATCC 49405 / DSM 1227 / KCTC 32145 / OM5) (Oligotropha carboxidovorans).